The primary structure comprises 201 residues: Charged multivesicular body protein 6 (201 aa).

Gly2 carries N-myristoyl glycine lipidation. The stretch at 10–145 forms a coiled coil; that stretch reads QSRVTEQDKA…YQRQIDELLA (136 aa). Residue Ser119 is modified to Phosphoserine. At Thr130 the chain carries Phosphothreonine. Positions 168-179 match the Type-2 MIT-interacting motif motif; the sequence is IELPEVPSEPLP. The tract at residues 170 to 181 is interaction with VPS4A; the sequence is LPEVPSEPLPEK.

This sequence belongs to the SNF7 family. As to quaternary structure, probable core component of the endosomal sorting required for transport complex III (ESCRT-III). ESCRT-III components are thought to multimerize to form a flat lattice on the perimeter membrane of the endosome. Several assembly forms of ESCRT-III may exist that interact and act sequentially. Interacts with VPS4A; the interaction is direct. Interacts with VPS4B; the interaction is direct. Interacts with CHMP4A, CHMP4B and CHMP4C. Interacts with SNF8, VPS25 and VPS36. ISGylated in a CHMP5-dependent manner. Isgylation weakens its interaction with VPS4A. As to expression, ubiquitously expressed.

It is found in the endomembrane system. It localises to the endosome membrane. Its subcellular location is the late endosome membrane. The protein localises to the membrane. In terms of biological role, probable core component of the endosomal sorting required for transport complex III (ESCRT-III) which is involved in multivesicular bodies (MVBs) formation and sorting of endosomal cargo proteins into MVBs. MVBs contain intraluminal vesicles (ILVs) that are generated by invagination and scission from the limiting membrane of the endosome and mostly are delivered to lysosomes enabling degradation of membrane proteins, such as stimulated growth factor receptors, lysosomal enzymes and lipids. The MVB pathway appears to require the sequential function of ESCRT-O, -I,-II and -III complexes. ESCRT-III proteins mostly dissociate from the invaginating membrane before the ILV is released. The ESCRT machinery also functions in topologically equivalent membrane fission events, such as the terminal stages of cytokinesis and the budding of enveloped viruses (HIV-1 and other lentiviruses). ESCRT-III proteins are believed to mediate the necessary vesicle extrusion and/or membrane fission activities, possibly in conjunction with the AAA ATPase VPS4. In the ESCRT-III complex, it probably serves as an acceptor for the ESCRT-II complex on endosomal membranes. This Homo sapiens (Human) protein is Charged multivesicular body protein 6 (CHMP6).